Here is a 90-residue protein sequence, read N- to C-terminus: ATP-dependent Clp protease adapter protein ClpS (90 aa).

Belongs to the ClpS family. Binds to the N-terminal domain of the chaperone ClpA.

Its function is as follows. Involved in the modulation of the specificity of the ClpAP-mediated ATP-dependent protein degradation. This chain is ATP-dependent Clp protease adapter protein ClpS, found in Helicobacter pylori (strain J99 / ATCC 700824) (Campylobacter pylori J99).